The chain runs to 173 residues: Ribosome maturation factor RimM (173 aa).

The 73-residue stretch at 98 to 170 (EGEFYWCDLI…IMTVSPTEGL (73 aa)) folds into the PRC barrel domain.

This sequence belongs to the RimM family. Binds ribosomal protein uS19.

Its subcellular location is the cytoplasm. An accessory protein needed during the final step in the assembly of 30S ribosomal subunit, possibly for assembly of the head region. Essential for efficient processing of 16S rRNA. May be needed both before and after RbfA during the maturation of 16S rRNA. It has affinity for free ribosomal 30S subunits but not for 70S ribosomes. In Geobacter metallireducens (strain ATCC 53774 / DSM 7210 / GS-15), this protein is Ribosome maturation factor RimM.